A 580-amino-acid chain; its full sequence is Glutamine--tRNA ligase (580 aa).

The 'HIGH' region motif lies at Pro41–His51. ATP is bound by residues Glu42–Asn44 and His48–Ala54. 2 residues coordinate L-glutamine: Asp74 and Tyr218. ATP-binding positions include Thr237, Arg285–Leu286, and Met293–Lys295. Positions Val292 to Arg296 match the 'KMSKS' region motif.

It belongs to the class-I aminoacyl-tRNA synthetase family. As to quaternary structure, monomer.

It is found in the cytoplasm. It carries out the reaction tRNA(Gln) + L-glutamine + ATP = L-glutaminyl-tRNA(Gln) + AMP + diphosphate. This is Glutamine--tRNA ligase from Xylella fastidiosa (strain M12).